The primary structure comprises 55 residues: Large ribosomal subunit protein bL33 (55 aa).

Belongs to the bacterial ribosomal protein bL33 family.

The sequence is that of Large ribosomal subunit protein bL33 from Xanthomonas axonopodis pv. citri (strain 306).